A 126-amino-acid polypeptide reads, in one-letter code: Ribonuclease P protein component (126 aa).

Belongs to the RnpA family. In terms of assembly, consists of a catalytic RNA component (M1 or rnpB) and a protein subunit.

The enzyme catalyses Endonucleolytic cleavage of RNA, removing 5'-extranucleotides from tRNA precursor.. RNaseP catalyzes the removal of the 5'-leader sequence from pre-tRNA to produce the mature 5'-terminus. It can also cleave other RNA substrates such as 4.5S RNA. The protein component plays an auxiliary but essential role in vivo by binding to the 5'-leader sequence and broadening the substrate specificity of the ribozyme. The sequence is that of Ribonuclease P protein component from Brevibacillus brevis (strain 47 / JCM 6285 / NBRC 100599).